The sequence spans 272 residues: MISVNPSTSNLEKLDLHNLPAEQTALDIKNLDLYYGEDQALYDISMRIPNNRVTAFIGPSGCGKSTLLRCINRMNDLVEICRIEGQIDMHGHNIYGKNVDVASLRRRVGMVFQRPNPFPKSIYENVVYGLRLQGVKDKRVLDEAVETSLRGAALWDEVKDRLNASAFSLSGGQQQRLVIARSIAIEPEILLLDEPTSALDPISTLTIEELITDLKDKYTVVIVTHNMQQAARVSDQTAFLYMGKLIEYADTDTLFTTPSEKQTEDYITGRYG.

The region spanning 26–267 is the ABC transporter domain; it reads LDIKNLDLYY…PSEKQTEDYI (242 aa). ATP is bound at residue 58–65; sequence GPSGCGKS.

Belongs to the ABC transporter superfamily. Phosphate importer (TC 3.A.1.7) family. In terms of assembly, the complex is composed of two ATP-binding proteins (PstB), two transmembrane proteins (PstC and PstA) and a solute-binding protein (PstS).

It is found in the cell inner membrane. It catalyses the reaction phosphate(out) + ATP + H2O = ADP + 2 phosphate(in) + H(+). In terms of biological role, part of the ABC transporter complex PstSACB involved in phosphate import. Responsible for energy coupling to the transport system. The chain is Phosphate import ATP-binding protein PstB from Idiomarina loihiensis (strain ATCC BAA-735 / DSM 15497 / L2-TR).